The sequence spans 211 residues: Probable septum site-determining protein MinC (211 aa).

It belongs to the MinC family. In terms of assembly, interacts with MinD and FtsZ.

Its function is as follows. Cell division inhibitor that blocks the formation of polar Z ring septums. Rapidly oscillates between the poles of the cell to destabilize FtsZ filaments that have formed before they mature into polar Z rings. Prevents FtsZ polymerization. The protein is Probable septum site-determining protein MinC of Clostridium perfringens (strain 13 / Type A).